Consider the following 392-residue polypeptide: Lipid-A-disaccharide synthase (392 aa).

Belongs to the LpxB family.

The catalysed reaction is a lipid X + a UDP-2-N,3-O-bis[(3R)-3-hydroxyacyl]-alpha-D-glucosamine = a lipid A disaccharide + UDP + H(+). It participates in bacterial outer membrane biogenesis; LPS lipid A biosynthesis. Functionally, condensation of UDP-2,3-diacylglucosamine and 2,3-diacylglucosamine-1-phosphate to form lipid A disaccharide, a precursor of lipid A, a phosphorylated glycolipid that anchors the lipopolysaccharide to the outer membrane of the cell. This is Lipid-A-disaccharide synthase from Bradyrhizobium diazoefficiens (strain JCM 10833 / BCRC 13528 / IAM 13628 / NBRC 14792 / USDA 110).